Consider the following 181-residue polypeptide: Probable inactive acireductone dioxygenase 2 (181 aa).

The protein belongs to the acireductone dioxygenase (ARD) family.

The protein resides in the cytoplasm. It localises to the nucleus. Functionally, probable inactive acireductone dioxygenase. The chain is Probable inactive acireductone dioxygenase 2 from Sorghum bicolor (Sorghum).